The following is a 258-amino-acid chain: Clathrin light chain 3 (258 aa).

Positions 1–18 (MSSTLSNEESGLGDSNRS) are enriched in polar residues. The interval 1–96 (MSSTLSNEES…PPPSAMEKEE (96 aa)) is disordered. Ser2 carries the post-translational modification N-acetylserine. Residues 34–50 (SRFQSQRFDSSFSNFDS) are compositionally biased toward low complexity. Residues 66–79 (RPETQSPPSINSFD) are compositionally biased toward polar residues. An involved in binding clathrin heavy chain region spans residues 90–152 (SAMEKEEGFA…TIENNKKLNR (63 aa)). Residues 105-164 (RLNALRLEEKEKEEKEMVQQILEAAEQYKAEFYSKRNVTIENNKKLNREKEKFFLENQEK) are a coiled coil. A compositionally biased stretch (basic residues) spans 224–234 (LKHNPPTHMKP). Residues 224–258 (LKHNPPTHMKPKLPSPSGADPNVSVSEQVTVTEKL) are disordered. The segment covering 246-258 (VSVSEQVTVTEKL) has biased composition (polar residues).

It belongs to the clathrin light chain family. As to quaternary structure, clathrin coats are formed from molecules containing 3 heavy chains and 3 light chains.

It is found in the cytoplasmic vesicle membrane. The protein localises to the membrane. Its subcellular location is the coated pit. Clathrin is the major protein of the polyhedral coat of coated pits and vesicles. The protein is Clathrin light chain 3 of Arabidopsis thaliana (Mouse-ear cress).